A 180-amino-acid chain; its full sequence is MPQRLQILYNTVIVPKLQKELGYTNIHQVPRLEKIVINRGLGEASQNAKALESSIAEISAITGQRPVITRAKKAIASFKIRKGMPVGLMVTLRRERMYAFLDRLINVALPRIRDFRGVSPKAFDGRGNYTLGIREQLIFPEINYDSVDQLRGMDISIVTTAKTDEEGRALLKAFGMPFAS.

It belongs to the universal ribosomal protein uL5 family. Part of the 50S ribosomal subunit; part of the 5S rRNA/L5/L18/L25 subcomplex. Contacts the 5S rRNA and the P site tRNA. Forms a bridge to the 30S subunit in the 70S ribosome.

Functionally, this is one of the proteins that bind and probably mediate the attachment of the 5S RNA into the large ribosomal subunit, where it forms part of the central protuberance. In the 70S ribosome it contacts protein S13 of the 30S subunit (bridge B1b), connecting the 2 subunits; this bridge is implicated in subunit movement. Contacts the P site tRNA; the 5S rRNA and some of its associated proteins might help stabilize positioning of ribosome-bound tRNAs. This is Large ribosomal subunit protein uL5 from Synechococcus sp. (strain JA-2-3B'a(2-13)) (Cyanobacteria bacterium Yellowstone B-Prime).